An 83-amino-acid chain; its full sequence is Small ribosomal subunit protein uS17 (83 aa).

It belongs to the universal ribosomal protein uS17 family. As to quaternary structure, part of the 30S ribosomal subunit.

One of the primary rRNA binding proteins, it binds specifically to the 5'-end of 16S ribosomal RNA. The sequence is that of Small ribosomal subunit protein uS17 from Chlamydia abortus (strain DSM 27085 / S26/3) (Chlamydophila abortus).